A 134-amino-acid polypeptide reads, in one-letter code: MAVKKTKSKQKVKRKNIVSGVAHIHSTHQNTIVAFSDEAGNVFAWSSAGAIGYKGTKKKTPYAAGLATTAAVEKAKEHGLKEVRVELKGTGSGKDAARKQIEALGIIIKEVKDVTPIPHNGTRPPKKVLKRDLK.

Residues 115 to 134 are disordered; it reads TPIPHNGTRPPKKVLKRDLK. Residues 124 to 134 are compositionally biased toward basic residues; sequence PPKKVLKRDLK.

Belongs to the universal ribosomal protein uS11 family. In terms of assembly, part of the 30S ribosomal subunit. Interacts with proteins S7 and S18. Binds to IF-3.

In terms of biological role, located on the platform of the 30S subunit, it bridges several disparate RNA helices of the 16S rRNA. Forms part of the Shine-Dalgarno cleft in the 70S ribosome. In Mycoplasma mobile (strain ATCC 43663 / 163K / NCTC 11711) (Mesomycoplasma mobile), this protein is Small ribosomal subunit protein uS11.